A 57-amino-acid polypeptide reads, in one-letter code: RPRFCELPAETGLCKARIRSFHYNRAAQQCLEFIYGGCGGNANRFKTIDECHRTCVG.

A BPTI/Kunitz inhibitor domain is found at 5–55; it reads CELPAETGLCKARIRSFHYNRAAQQCLEFIYGGCGGNANRFKTIDECHRTC. Cystine bridges form between Cys5/Cys55, Cys14/Cys38, and Cys30/Cys51.

It belongs to the venom Kunitz-type family. In terms of tissue distribution, expressed by the venom gland.

The protein localises to the secreted. Serine protease inhibitor. This chain is Kunitz-type serine protease inhibitor 2, found in Naja nivea (Cape cobra).